The following is a 794-amino-acid chain: ALG-2 interacting protein X (794 aa).

The BRO1 domain maps to 1 to 385 (MLSIERKRTE…DNIEFHNQSA (385 aa)). Coiled-coil stretches lie at residues 499-568 (SFIR…LCKK) and 600-655 (LNES…NLDE). The interval 695–794 (GVNPHSPLTS…PPYNSNNKHY (100 aa)) is disordered. The span at 698-712 (PHSPLTSPSPSLQSP) shows a compositional bias: low complexity. The segment covering 713–722 (VNNYPNQFSS) has biased composition (polar residues). 2 stretches are compositionally biased toward low complexity: residues 723 to 742 (PQYH…YVPS) and 749 to 764 (YSYN…QFGG). Over residues 765–787 (PLPPPQSFSAPPPPQSFTAPPPY) the composition is skewed to pro residues.

As to quaternary structure, self-associates; the interaction is calcium-independent Interacts with pefa; the interaction is calcium-dependent. Interacts with pefb; the interaction is calcium-dependent.

It localises to the cytoplasm. Its subcellular location is the cytoplasmic vesicle membrane. It is found in the endosome. Functionally, unknown. Required for development but not for cell death. The protein is ALG-2 interacting protein X (alxA) of Dictyostelium discoideum (Social amoeba).